An 858-amino-acid chain; its full sequence is ATP-dependent DNA helicase Q-like SIM (858 aa).

One can recognise a UBA domain in the interval 2–44 (DLSSDQLVMKIVEMGFEKLDALEAVKAVGGKSCDDAVEYILKG). Residues 177-353 (LSTWVAHKDC…LESLHLSKET (177 aa)) form the Helicase ATP-binding domain. 190–197 (AATGSGKS) serves as a coordination point for ATP. The short motif at 288–291 (DEAH) is the DEAH box element. Residues 402 to 450 (LAVISRESEEQTDFGSHDSENIHETDYDEDEEDQENSLAKKNSSNGKEL) form a disordered region. Residues 416-426 (GSHDSENIHET) show a composition bias toward basic and acidic residues. Acidic residues predominate over residues 427–436 (DYDEDEEDQE). Residues 437–448 (NSLAKKNSSNGK) show a composition bias toward polar residues. The 137-residue stretch at 491–627 (EKQKDLEGLT…QTEQAYKMLS (137 aa)) folds into the Helicase C-terminal domain. Positions 822 to 858 (RQRLERRERKPRRERKPRKKRTRGRSSTKLHPWRSKE) are disordered. Residues 830-858 (RKPRRERKPRKKRTRGRSSTKLHPWRSKE) are compositionally biased toward basic residues.

Belongs to the helicase family. RecQ subfamily. Mg(2+) is required as a cofactor. It depends on Mn(2+) as a cofactor. In terms of tissue distribution, mostly expressed in roots and seedlings, and, to a lower extent, in leaves, shoots, shoot apical mersitem, inflorescences, flowers, siliques and seeds.

The protein localises to the nucleus. It carries out the reaction Couples ATP hydrolysis with the unwinding of duplex DNA by translocating in the 3'-5' direction.. The enzyme catalyses ATP + H2O = ADP + phosphate + H(+). In terms of biological role, plant specific, probable 3'-5' DNA helicase that may play a role in the repair of DNA. The polypeptide is ATP-dependent DNA helicase Q-like SIM (RECQSIM) (Arabidopsis thaliana (Mouse-ear cress)).